The primary structure comprises 207 residues: NADH-quinone oxidoreductase subunit C (207 aa).

It belongs to the complex I 30 kDa subunit family. In terms of assembly, NDH-1 is composed of 14 different subunits. Subunits NuoB, C, D, E, F, and G constitute the peripheral sector of the complex.

It is found in the cell inner membrane. It catalyses the reaction a quinone + NADH + 5 H(+)(in) = a quinol + NAD(+) + 4 H(+)(out). Its function is as follows. NDH-1 shuttles electrons from NADH, via FMN and iron-sulfur (Fe-S) centers, to quinones in the respiratory chain. The immediate electron acceptor for the enzyme in this species is believed to be ubiquinone. Couples the redox reaction to proton translocation (for every two electrons transferred, four hydrogen ions are translocated across the cytoplasmic membrane), and thus conserves the redox energy in a proton gradient. The chain is NADH-quinone oxidoreductase subunit C from Jannaschia sp. (strain CCS1).